The primary structure comprises 412 residues: Imidazolonepropionase (412 aa).

Histidine 76 and histidine 78 together coordinate Fe(3+). Positions 76 and 78 each coordinate Zn(2+). Arginine 85, tyrosine 148, and histidine 181 together coordinate 4-imidazolone-5-propanoate. Tyrosine 148 lines the N-formimidoyl-L-glutamate pocket. A Fe(3+)-binding site is contributed by histidine 242. Histidine 242 provides a ligand contact to Zn(2+). Glutamate 245 provides a ligand contact to 4-imidazolone-5-propanoate. Aspartate 317 serves as a coordination point for Fe(3+). Zn(2+) is bound at residue aspartate 317. Asparagine 319 and glycine 321 together coordinate N-formimidoyl-L-glutamate. Residue serine 322 coordinates 4-imidazolone-5-propanoate.

Belongs to the metallo-dependent hydrolases superfamily. HutI family. It depends on Zn(2+) as a cofactor. Fe(3+) serves as cofactor.

The protein resides in the cytoplasm. The enzyme catalyses 4-imidazolone-5-propanoate + H2O = N-formimidoyl-L-glutamate. It functions in the pathway amino-acid degradation; L-histidine degradation into L-glutamate; N-formimidoyl-L-glutamate from L-histidine: step 3/3. Functionally, catalyzes the hydrolytic cleavage of the carbon-nitrogen bond in imidazolone-5-propanoate to yield N-formimidoyl-L-glutamate. It is the third step in the universal histidine degradation pathway. In Staphylococcus aureus (strain MRSA252), this protein is Imidazolonepropionase.